The following is a 2464-amino-acid chain: Nonribosomal peptide synthetase NPS2 (2464 aa).

The tract at residues 275–670 is adenylation 1; that stretch reads DDHHPGTSQP…GRIDTQIKLR (396 aa). The 75-residue stretch at 814-888 folds into the Carrier 1 domain; that stretch reads TKAEGQLLEI…QIAKALDASS (75 aa). S848 is subject to O-(pantetheine 4'-phosphoryl)serine. The interval 924-1325 is condensation 1; the sequence is IYPPFPLQEG…EGLALDLAQG (402 aa). The 74-residue stretch at 1364–1437 folds into the Carrier 2 domain; it reads EDLLLRLRKI…RMAASAGKKI (74 aa). S1398 bears the O-(pantetheine 4'-phosphoryl)serine mark. The interval 1479–1887 is condensation 2; the sequence is DVFPVTTLQA…LRVLVDDLDA (409 aa). The Carrier 3 domain occupies 1917-1993; sequence SSWDEKSSTL…DLVMRAGAED (77 aa). Position 1954 is an O-(pantetheine 4'-phosphoryl)serine (S1954). Positions 2047–2340 are condensation 3; that stretch reads GGSRYQHVFG…ATQIQDDLRE (294 aa).

It belongs to the NRP synthetase family.

Its pathway is siderophore biosynthesis. Its function is as follows. Nonribosomal peptide synthetase; part of the siderophore basidioferrin biosynthetic pathway. The biosynthesis of basidioferrin depends on the hydroxylation of ornithine to N(5)-hydroxyornithine, catalyzed by the monooxygenase SMO1. The second step, the acylation of N(5)-hydroxy-L-ornithine is catalyzed by a not yet identified N-acyltransferase. Finally, assembly of basidioferrin is catalyzed by the nonribosomal peptide synthase (NRPS) NPS2 via amide bond formation between three L-AHO molecules to release the linear L-AHO trimer. N-5-acetyl-N-5-hydroxy-L-ornithine (L-AHO) and N-5-cis-anhydromevalonyl-N-5-hydroxy-L-ornithine (L-AMHO) are accepted as the substrates by the NPS2 adenylation (A) domain, but only L-AHO is trimerized. In Ceriporiopsis subvermispora (strain B) (White-rot fungus), this protein is Nonribosomal peptide synthetase NPS2.